Here is a 191-residue protein sequence, read N- to C-terminus: Probable molybdenum cofactor guanylyltransferase (191 aa).

GTP-binding positions include Leu-6–Gly-8, Lys-18, Asp-67, and Asp-92. Residue Asp-92 coordinates Mg(2+).

It belongs to the MobA family. Mg(2+) is required as a cofactor.

The protein resides in the cytoplasm. The catalysed reaction is Mo-molybdopterin + GTP + H(+) = Mo-molybdopterin guanine dinucleotide + diphosphate. Transfers a GMP moiety from GTP to Mo-molybdopterin (Mo-MPT) cofactor (Moco or molybdenum cofactor) to form Mo-molybdopterin guanine dinucleotide (Mo-MGD) cofactor. This Thermococcus gammatolerans (strain DSM 15229 / JCM 11827 / EJ3) protein is Probable molybdenum cofactor guanylyltransferase.